Here is a 347-residue protein sequence, read N- to C-terminus: GTPase Obg (347 aa).

Positions 1-158 (MFIDNVKLVL…LSVRLELKLI (158 aa)) constitute an Obg domain. The 181-residue stretch at 159 to 339 (ADVGLVGFPN…LKFMLLEEVK (181 aa)) folds into the OBG-type G domain. Residues 165-172 (GFPNVGKS), 190-194 (FTTLT), 212-215 (DIPG), 280-283 (SKSD), and 320-322 (SSL) contribute to the GTP site. Positions 172 and 192 each coordinate Mg(2+).

It belongs to the TRAFAC class OBG-HflX-like GTPase superfamily. OBG GTPase family. As to quaternary structure, monomer. Mg(2+) is required as a cofactor.

The protein localises to the cytoplasm. Its function is as follows. An essential GTPase which binds GTP, GDP and possibly (p)ppGpp with moderate affinity, with high nucleotide exchange rates and a fairly low GTP hydrolysis rate. Plays a role in control of the cell cycle, stress response, ribosome biogenesis and in those bacteria that undergo differentiation, in morphogenesis control. The protein is GTPase Obg of Campylobacter lari (strain RM2100 / D67 / ATCC BAA-1060).